The following is a 148-amino-acid chain: Photosystem II extrinsic protein U, chloroplastic (148 aa).

The transit peptide at 1–32 (MKLAVFAVLISTVAAFVAPNGVQRAATTELNA) directs the protein to the chloroplast. The N-terminal 22 residues, 33 to 54 (ERREFLSAAAVAAGLAFPLTAN), are a transit peptide targeting the thylakoid.

This sequence belongs to the PsbU family. As to quaternary structure, PSII is composed of 1 copy each of membrane proteins PsbA, PsbB, PsbC, PsbD, PsbE, PsbF, PsbH, PsbI, PsbJ, PsbK, PsbL, PsbM, PsbT, PsbX, PsbY, PsbZ, Psb30/Ycf12, at least 3 peripheral proteins of the oxygen-evolving complex and a large number of cofactors. It forms dimeric complexes. The oxygen-evolving complex may be composed of PsbO, PsbQ', PsbV and PsbU.

It is found in the plastid. The protein localises to the chloroplast thylakoid membrane. One of the extrinsic, lumenal subunits of photosystem II (PSII), which stabilize and protect the oxygen-evolving complex. PSII is a light-driven water plastoquinone oxidoreductase, using light energy to abstract electrons from H(2)O, generating a proton gradient subsequently used for ATP formation. Stabilizes the structure of photosystem II oxygen-evolving complex (OEC), the ion environment of oxygen evolution and protects the OEC against heat-induced inactivation. In Phaeodactylum tricornutum (Diatom), this protein is Photosystem II extrinsic protein U, chloroplastic.